The chain runs to 72 residues: Exodeoxyribonuclease 7 small subunit (72 aa).

The protein belongs to the XseB family. Heterooligomer composed of large and small subunits.

The protein resides in the cytoplasm. The enzyme catalyses Exonucleolytic cleavage in either 5'- to 3'- or 3'- to 5'-direction to yield nucleoside 5'-phosphates.. Its function is as follows. Bidirectionally degrades single-stranded DNA into large acid-insoluble oligonucleotides, which are then degraded further into small acid-soluble oligonucleotides. This chain is Exodeoxyribonuclease 7 small subunit, found in Ruegeria pomeroyi (strain ATCC 700808 / DSM 15171 / DSS-3) (Silicibacter pomeroyi).